A 128-amino-acid polypeptide reads, in one-letter code: Leucine-rich single-pass membrane protein 1 (128 aa).

S24 carries the phosphoserine modification. A helical membrane pass occupies residues 65–85; it reads VGLIIVLIISLALVSFVIFLI. Residues 87 to 111 adopt a coiled-coil conformation; sequence QTENKMEDVSRRLAAEGKDIDDLKK.

The protein localises to the membrane. The sequence is that of Leucine-rich single-pass membrane protein 1 (LSMEM1) from Bos taurus (Bovine).